The following is a 475-amino-acid chain: Arginine/ornithine antiporter (475 aa).

12 consecutive transmembrane segments (helical) span residues 10-30 (IGLL…GVFG), 42-62 (GPVL…ALSL), 74-94 (GIFS…SGWG), 101-121 (LGNV…FPIF), 157-177 (LVTI…IVLF), 205-225 (NCMM…MLSA), 238-258 (ILGL…PYGY), 283-303 (WGGY…WLSW), 333-353 (PTFA…TLLF), 361-381 (AYSL…AYQI), 397-417 (LLIG…AGVS), and 451-471 (WLIT…VVSG).

Belongs to the amino acid-polyamine-organocation (APC) superfamily. Basic amino acid/polyamine antiporter (APA) (TC 2.A.3.2) family.

It localises to the cell membrane. It carries out the reaction L-ornithine(in) + L-arginine(out) = L-ornithine(out) + L-arginine(in). Its function is as follows. Catalyzes electroneutral exchange between L-arginine and L-ornithine. The polypeptide is Arginine/ornithine antiporter (arcD) (Latilactobacillus sakei (Lactobacillus sakei)).